A 361-amino-acid polypeptide reads, in one-letter code: MTPTLRRKLEALAERREELQHLLSDPDVVNNNDKFRTLSRELSQLEPVAVALEDEARAKADLSAAEAMRTDPEMRELAEEEIAAAQARLEELDTQLASLLVPRDPRDDGNLFLEVRAGTGGDEAAIFAGDLFRMYARYAERQGWKVEIESDSPGEHGGYKEVVARVVGRGAYSRLKFESGTHRVQRVPATESQGRIHTSAATVAIIPEADDVEEIVINPADLKVDTFRSSGAGGQHVNKTESAIRITHVPSGVVVECQTERSQHANRDKAMKRLKAQLLDTEHSKAAAAQAQTRKLQVGSGDRSQRIRTYSFPQGRITDHRVEGLTLYDLPNIIEGDLDALIARLLHEHQADELARLSDSP.

An N5-methylglutamine modification is found at glutamine 235.

It belongs to the prokaryotic/mitochondrial release factor family. In terms of processing, methylated by PrmC. Methylation increases the termination efficiency of RF1.

The protein localises to the cytoplasm. Its function is as follows. Peptide chain release factor 1 directs the termination of translation in response to the peptide chain termination codons UAG and UAA. This Xanthomonas oryzae pv. oryzae (strain MAFF 311018) protein is Peptide chain release factor 1.